The following is a 136-amino-acid chain: MSLIQEFKAFASRGNVIDMAVGIIIGAAFGKIVSSFVADIIMPPIGIILGGVNFSDLSVVLLAAQGDAPAVVIAYGKFIQTVIDFTIIAFAIFMGLKAINSLKRKQEEAPPASPAPTKDQELLSEIRDLLKAQQEK.

4 consecutive transmembrane segments (helical) span residues 9-29 (AFAS…GAAF), 32-52 (IVSS…LGGV), 54-74 (FSDL…VVIA), and 79-99 (IQTV…LKAI).

Belongs to the MscL family. As to quaternary structure, homopentamer.

Its subcellular location is the cell inner membrane. Channel that opens in response to stretch forces in the membrane lipid bilayer. May participate in the regulation of osmotic pressure changes within the cell. The protein is Large-conductance mechanosensitive channel of Shewanella oneidensis (strain ATCC 700550 / JCM 31522 / CIP 106686 / LMG 19005 / NCIMB 14063 / MR-1).